The sequence spans 200 residues: Probable GTP-binding protein EngB (200 aa).

In terms of domain architecture, EngB-type G spans 22–199; that stretch reads GLDEIALAGR…KDWIQARLYE (178 aa). GTP is bound by residues 30-37, 57-61, 78-81, 145-148, and 178-180; these read GRSNVGKS, GKTQT, DVPG, TKMD, and FSS. Mg(2+) contacts are provided by serine 37 and threonine 59.

It belongs to the TRAFAC class TrmE-Era-EngA-EngB-Septin-like GTPase superfamily. EngB GTPase family. Requires Mg(2+) as cofactor.

In terms of biological role, necessary for normal cell division and for the maintenance of normal septation. The protein is Probable GTP-binding protein EngB of Lactobacillus delbrueckii subsp. bulgaricus (strain ATCC 11842 / DSM 20081 / BCRC 10696 / JCM 1002 / NBRC 13953 / NCIMB 11778 / NCTC 12712 / WDCM 00102 / Lb 14).